A 274-amino-acid chain; its full sequence is Large ribosomal subunit protein uL2 (274 aa).

The tract at residues 224 to 274 (VAMNPVDHPHGGGEGRTSGGRHPVTPWGIPTKGYKTRRNKRSNKLIVQKRK) is disordered. The span at 257-274 (YKTRRNKRSNKLIVQKRK) shows a compositional bias: basic residues.

It belongs to the universal ribosomal protein uL2 family. In terms of assembly, part of the 50S ribosomal subunit. Forms a bridge to the 30S subunit in the 70S ribosome.

Functionally, one of the primary rRNA binding proteins. Required for association of the 30S and 50S subunits to form the 70S ribosome, for tRNA binding and peptide bond formation. It has been suggested to have peptidyltransferase activity; this is somewhat controversial. Makes several contacts with the 16S rRNA in the 70S ribosome. This Francisella tularensis subsp. holarctica (strain FTNF002-00 / FTA) protein is Large ribosomal subunit protein uL2.